The chain runs to 339 residues: Anthranilate phosphoribosyltransferase (339 aa).

5-phospho-alpha-D-ribose 1-diphosphate is bound by residues Gly-79, 82-83 (GD), Thr-87, 89-92 (NVST), 107-115 (KHGNRSVSS), and Ser-119. Gly-79 provides a ligand contact to anthranilate. Mg(2+) is bound at residue Ser-91. An anthranilate-binding site is contributed by Asn-110. Arg-165 serves as a coordination point for anthranilate. 2 residues coordinate Mg(2+): Asp-224 and Glu-225.

This sequence belongs to the anthranilate phosphoribosyltransferase family. Homodimer. It depends on Mg(2+) as a cofactor.

It catalyses the reaction N-(5-phospho-beta-D-ribosyl)anthranilate + diphosphate = 5-phospho-alpha-D-ribose 1-diphosphate + anthranilate. Its pathway is amino-acid biosynthesis; L-tryptophan biosynthesis; L-tryptophan from chorismate: step 2/5. In terms of biological role, catalyzes the transfer of the phosphoribosyl group of 5-phosphorylribose-1-pyrophosphate (PRPP) to anthranilate to yield N-(5'-phosphoribosyl)-anthranilate (PRA). The sequence is that of Anthranilate phosphoribosyltransferase from Caldivirga maquilingensis (strain ATCC 700844 / DSM 13496 / JCM 10307 / IC-167).